Consider the following 136-residue polypeptide: Translation initiation factor 5A (136 aa).

A Hypusine modification is found at Lys37.

Belongs to the eIF-5A family.

The protein localises to the cytoplasm. Its function is as follows. Functions by promoting the formation of the first peptide bond. This is Translation initiation factor 5A from Thermococcus kodakarensis (strain ATCC BAA-918 / JCM 12380 / KOD1) (Pyrococcus kodakaraensis (strain KOD1)).